A 392-amino-acid chain; its full sequence is p21-activated protein kinase-interacting protein 1 (392 aa).

6 WD repeats span residues 33 to 72, 73 to 113, 114 to 155, 156 to 195, 196 to 235, and 236 to 275; these read VADF…MKKK, IEHG…AKKW, ECLK…LVEG, RSAF…LDTA, SISG…CDSL, and VCLC…KMWK. The interval 312–392 is disordered; that stretch reads SLPPAAEPSP…RKKKKIKTMQ (81 aa). A Phosphoserine modification is found at serine 320. Basic and acidic residues predominate over residues 325–345; the sequence is EQSKIGKKEPGDTVHKEEKRS. Residues 381 to 392 show a composition bias toward basic residues; the sequence is KKRKKKKIKTMQ.

Interacts with PAK1. As to expression, expressed in brain, colon, heart, kidney, liver, lung, muscle, peripheral blood leukocytes, placenta, small intestine, spleen and thymus.

It is found in the nucleus. The protein resides in the nucleolus. Functionally, negatively regulates the PAK1 kinase. PAK1 is a member of the PAK kinase family, which has been shown to play a positive role in the regulation of signaling pathways involving MAPK8 and RELA. PAK1 exists as an inactive homodimer, which is activated by binding of small GTPases such as CDC42 to an N-terminal regulatory domain. PAK1IP1 also binds to the N-terminus of PAK1, and inhibits the specific activation of PAK1 by CDC42. May be involved in ribosomal large subunit assembly. The polypeptide is p21-activated protein kinase-interacting protein 1 (PAK1IP1) (Homo sapiens (Human)).